The following is a 314-amino-acid chain: Olfactory receptor 5F1 (314 aa).

At 1–25 (MTRKNYTSLTEFVLLGLADTLELQI) the chain is on the extracellular side. N-linked (GlcNAc...) asparagine glycosylation is present at asparagine 5. A helical transmembrane segment spans residues 26–46 (ILFLFFLVIYTLTVLGNLGMI). Topologically, residues 47–54 (LLIRIDSQ) are cytoplasmic. The helical transmembrane segment at 55–75 (LHTPMYFFLANLSFVDVCNST) threads the bilayer. Residues 76–99 (TITPKMLADLLSEKKTISFAGCFL) are Extracellular-facing. Cysteine 97 and cysteine 189 are joined by a disulfide. Residues 100-120 (QMYFFISLATTECILFGLMAY) traverse the membrane as a helical segment. Residues 121 to 139 (DRYAAICRPLLYSLIMSRT) lie on the Cytoplasmic side of the membrane. Residues 140-160 (VYLKMAAGAFAAGLLNFMVNT) traverse the membrane as a helical segment. Over 161–196 (SHVSSLSFCDSNVIHHFFCDSPPLFKLSCSDTILKE) the chain is Extracellular. The chain crosses the membrane as a helical span at residues 197–217 (SISSILAGVNIVGTLLVILSS). Topologically, residues 218–237 (YSYVLFSIFSMHSGEGRHRA) are cytoplasmic. Residues 238-258 (FSTCASHLTAIILFYATCIYT) traverse the membrane as a helical segment. The Extracellular segment spans residues 259 to 271 (YLRPSSSYSLNQD). The chain crosses the membrane as a helical span at residues 272-292 (KVASVFYTVVIPMLNPLIYSL). The Cytoplasmic portion of the chain corresponds to 293–314 (RSKEVKKALANVISRKRTSSFL).

This sequence belongs to the G-protein coupled receptor 1 family.

The protein localises to the cell membrane. In terms of biological role, odorant receptor. In Homo sapiens (Human), this protein is Olfactory receptor 5F1 (OR5F1).